Reading from the N-terminus, the 757-residue chain is Protein lsd90 (757 aa).

Composition is skewed to polar residues over residues methionine 1–asparagine 11, threonine 19–lysine 36, threonine 51–leucine 69, and aspartate 94–glutamate 118. 4 disordered regions span residues methionine 1–serine 131, glutamate 224–alanine 244, alanine 589–serine 633, and alanine 657–lysine 757. Residues aspartate 166 to lysine 604 adopt a coiled-coil conformation. A compositionally biased stretch (basic and acidic residues) spans alanine 589–serine 598. Over residues valine 619–lysine 632 the composition is skewed to polar residues. Residues serine 674 to threonine 693 show a composition bias toward low complexity. Glycine 718–serine 725 provides a ligand contact to ATP.

Functionally, may be involved in the metabolism of very long-chain fatty acid-containing phospholipids (VLCFA-PL). In Schizosaccharomyces pombe (strain 972 / ATCC 24843) (Fission yeast), this protein is Protein lsd90 (lsd90).